Here is a 185-residue protein sequence, read N- to C-terminus: Potassium-transporting ATPase KdpC subunit (185 aa).

The helical transmembrane segment at 8–28 (LGLVLIMFVLCGFIFPLTVTA) threads the bilayer. The tract at residues 113 to 132 (GQKLSSDAVTTSGSGLDPDI) is disordered. The span at 114 to 126 (QKLSSDAVTTSGS) shows a compositional bias: polar residues.

It belongs to the KdpC family. The system is composed of three essential subunits: KdpA, KdpB and KdpC.

The protein localises to the cell membrane. Its function is as follows. Part of the high-affinity ATP-driven potassium transport (or Kdp) system, which catalyzes the hydrolysis of ATP coupled with the electrogenic transport of potassium into the cytoplasm. This subunit acts as a catalytic chaperone that increases the ATP-binding affinity of the ATP-hydrolyzing subunit KdpB by the formation of a transient KdpB/KdpC/ATP ternary complex. The sequence is that of Potassium-transporting ATPase KdpC subunit from Staphylococcus haemolyticus (strain JCSC1435).